A 509-amino-acid chain; its full sequence is 2,3-bisphosphoglycerate-independent phosphoglycerate mutase (509 aa).

Positions 12 and 62 each coordinate Mn(2+). The active-site Phosphoserine intermediate is Ser62. Substrate contacts are provided by residues His123, Arg153–Asp154, Arg185, Arg191, Arg260–Arg263, and Lys333. Residues Asp400, His404, Asp441, His442, and His460 each coordinate Mn(2+).

This sequence belongs to the BPG-independent phosphoglycerate mutase family. As to quaternary structure, monomer. The cofactor is Mn(2+).

The catalysed reaction is (2R)-2-phosphoglycerate = (2R)-3-phosphoglycerate. The protein operates within carbohydrate degradation; glycolysis; pyruvate from D-glyceraldehyde 3-phosphate: step 3/5. Functionally, catalyzes the interconversion of 2-phosphoglycerate and 3-phosphoglycerate. This chain is 2,3-bisphosphoglycerate-independent phosphoglycerate mutase, found in Clostridium botulinum (strain ATCC 19397 / Type A).